The primary structure comprises 101 residues: Large ribosomal subunit protein uL24 (101 aa).

Belongs to the universal ribosomal protein uL24 family. As to quaternary structure, part of the 50S ribosomal subunit.

Functionally, one of two assembly initiator proteins, it binds directly to the 5'-end of the 23S rRNA, where it nucleates assembly of the 50S subunit. In terms of biological role, one of the proteins that surrounds the polypeptide exit tunnel on the outside of the subunit. This Borreliella afzelii (strain PKo) (Borrelia afzelii) protein is Large ribosomal subunit protein uL24.